Reading from the N-terminus, the 89-residue chain is Gallinacin-13 (89 aa).

Positions 1–23 (MRILQLLFAIVVILLLQDAPARG) are cleaved as a signal peptide. Disulfide bonds link C30–C58, C37–C51, and C41–C59. Positions 66–89 (PFSNPKHSVLHTAEQDPSPSLGGT) are disordered.

This sequence belongs to the beta-defensin family. As to expression, expressed in the liver, gall bladder, kidney, small intestine, spleen, testis, ovary and male and female reproductive tracts. Not detected in the ovarian stroma and the theca and granulosa layers of the ovarian follicle.

Its subcellular location is the secreted. It is found in the cytoplasmic granule. Has bactericidal activity. Potent activity against E.coli, L.monocytogenes, S.typhimurium and S.pyogenes but mot against S.aureus. Functionally, has bactericidal activity. The sequence is that of Gallinacin-13 (GAL13) from Gallus gallus (Chicken).